The sequence spans 147 residues: Cytochrome c-type biogenesis protein CcmE (147 aa).

The Cytoplasmic segment spans residues 1 to 9 (MKSLKKQRR). A helical; Signal-anchor for type II membrane protein membrane pass occupies residues 10-30 (IQIIALATVALVGSTALIGYA). The Periplasmic segment spans residues 31–147 (MRDGINYFRS…EQGVYREGDS (117 aa)). Residues His123 and Tyr127 each coordinate heme.

It belongs to the CcmE/CycJ family.

It is found in the cell inner membrane. Its function is as follows. Heme chaperone required for the biogenesis of c-type cytochromes. Transiently binds heme delivered by CcmC and transfers the heme to apo-cytochromes in a process facilitated by CcmF and CcmH. This chain is Cytochrome c-type biogenesis protein CcmE, found in Ruegeria sp. (strain TM1040) (Silicibacter sp.).